A 275-amino-acid polypeptide reads, in one-letter code: MKLSLLAIAAIAPFVSAHYFFDTLIIDGQESSPNQYVRSNTRAAKYNPTKWVNTRDNMTPDMPDFRCNKGAFTFAGQTGTAEVKAGSKLALKLGVGATMKHPGPALVYMSKAPSTAKTYQGDGDWFKIYEEGVCDKNKDLKSDAWCSWDKDRVEFTIPADLPDGEYLIRPEHIGVHGAHAGEAEFYYSCAQVKVVGGGNGNPGPTVKFPGAYKKDDPSFNFSIYGGYKEYPMPGPEVWSGASGSKSYSKVVNVNAADATSEGTFGHREHARDFNY.

The signal sequence occupies residues 1 to 17 (MKLSLLAIAAIAPFVSA). Cu(2+) contacts are provided by His18 and His101. Cys67 and Cys189 are joined by a disulfide. His176 contacts O2. Tyr186 is a Cu(2+) binding site. The N-linked (GlcNAc...) asparagine glycan is linked to Asn220.

This sequence belongs to the polysaccharide monooxygenase AA9 family. It depends on Cu(2+) as a cofactor.

It is found in the secreted. It carries out the reaction [(1-&gt;4)-beta-D-glucosyl]n+m + reduced acceptor + O2 = 4-dehydro-beta-D-glucosyl-[(1-&gt;4)-beta-D-glucosyl]n-1 + [(1-&gt;4)-beta-D-glucosyl]m + acceptor + H2O.. Functionally, lytic polysaccharide monooxygenase (LPMO) that depolymerizes crystalline and amorphous polysaccharides via the oxidation of scissile alpha- or beta-(1-4)-glycosidic bonds, yielding C1 or C4 oxidation products. Catalysis by LPMOs requires the reduction of the active-site copper from Cu(II) to Cu(I) by a reducing agent and H(2)O(2) or O(2) as a cosubstrate. The polypeptide is AA9 family lytic polysaccharide monooxygenase D (Aspergillus tamarii).